We begin with the raw amino-acid sequence, 473 residues long: Biotin-dependent acetyl-/propionyl-coenzyme A carboxylase beta6 subunit (473 aa).

A CoA carboxyltransferase N-terminal domain is found at 1–224; the sequence is MTIMAPEAVG…QGHFDRSKAE (224 aa). Positions 225 to 473 constitute a CoA carboxyltransferase C-terminal domain; it reads AGDTDIHALL…RRGRHKNIPL (249 aa).

Belongs to the AccD/PCCB family. In terms of assembly, the biotin-dependent acyl-CoA carboxylase complex is composed of AccA3, which contains the biotin carboxylase (BC) and biotin carboxyl carrier protein (BCCP) domains, and AccD6, which contains the carboxyl transferase (CT) domain.

The enzyme catalyses N(6)-carboxybiotinyl-L-lysyl-[protein] + acetyl-CoA = N(6)-biotinyl-L-lysyl-[protein] + malonyl-CoA. It carries out the reaction N(6)-carboxybiotinyl-L-lysyl-[protein] + propanoyl-CoA = methylmalonyl-CoA + N(6)-biotinyl-L-lysyl-[protein]. Its pathway is lipid metabolism; fatty acid biosynthesis. It participates in lipid metabolism; mycolic acid biosynthesis. In terms of biological role, component of a biotin-dependent acyl-CoA carboxylase complex. This subunit transfers the CO2 from carboxybiotin to the CoA ester substrate. When associated with the alpha3 subunit AccA3, is involved in the carboxylation of acetyl-CoA and propionyl-CoA. The chain is Biotin-dependent acetyl-/propionyl-coenzyme A carboxylase beta6 subunit (accD6) from Mycobacterium bovis (strain ATCC BAA-935 / AF2122/97).